The primary structure comprises 222 residues: Octanoyltransferase (222 aa).

A BPL/LPL catalytic domain is found at 32-207; the sequence is RDRPDVLMLL…AFARVFGVQC (176 aa). Substrate-binding positions include 72–79, 139–141, and 152–154; these read RGGEVTYH, ALG, and GFA. Residue Cys170 is the Acyl-thioester intermediate of the active site.

It belongs to the LipB family.

It localises to the cytoplasm. The enzyme catalyses octanoyl-[ACP] + L-lysyl-[protein] = N(6)-octanoyl-L-lysyl-[protein] + holo-[ACP] + H(+). Its pathway is protein modification; protein lipoylation via endogenous pathway; protein N(6)-(lipoyl)lysine from octanoyl-[acyl-carrier-protein]: step 1/2. In terms of biological role, catalyzes the transfer of endogenously produced octanoic acid from octanoyl-acyl-carrier-protein onto the lipoyl domains of lipoate-dependent enzymes. Lipoyl-ACP can also act as a substrate although octanoyl-ACP is likely to be the physiological substrate. This Gloeobacter violaceus (strain ATCC 29082 / PCC 7421) protein is Octanoyltransferase.